The chain runs to 328 residues: Methionyl-tRNA formyltransferase (328 aa).

121–124 is a binding site for (6S)-5,6,7,8-tetrahydrofolate; it reads SLLP.

The protein belongs to the Fmt family.

The enzyme catalyses L-methionyl-tRNA(fMet) + (6R)-10-formyltetrahydrofolate = N-formyl-L-methionyl-tRNA(fMet) + (6S)-5,6,7,8-tetrahydrofolate + H(+). Its function is as follows. Attaches a formyl group to the free amino group of methionyl-tRNA(fMet). The formyl group appears to play a dual role in the initiator identity of N-formylmethionyl-tRNA by promoting its recognition by IF2 and preventing the misappropriation of this tRNA by the elongation apparatus. The sequence is that of Methionyl-tRNA formyltransferase from Paraburkholderia phytofirmans (strain DSM 17436 / LMG 22146 / PsJN) (Burkholderia phytofirmans).